Consider the following 113-residue polypeptide: uncharacterized protein (113 aa).

An N-terminal signal peptide occupies residues 1–19 (MLSPLSPRIIAAFTTAVGA).

This sequence to M.tuberculosis Rv1291c.

This is an uncharacterized protein from Mycobacterium tuberculosis (strain CDC 1551 / Oshkosh).